A 272-amino-acid polypeptide reads, in one-letter code: Urease accessory protein UreD (272 aa).

It belongs to the UreD family. UreD, UreF and UreG form a complex that acts as a GTP-hydrolysis-dependent molecular chaperone, activating the urease apoprotein by helping to assemble the nickel containing metallocenter of UreC. The UreE protein probably delivers the nickel.

The protein resides in the cytoplasm. In terms of biological role, required for maturation of urease via the functional incorporation of the urease nickel metallocenter. In Opitutus terrae (strain DSM 11246 / JCM 15787 / PB90-1), this protein is Urease accessory protein UreD.